The chain runs to 145 residues: uncharacterized protein (145 aa).

2 helical membrane-spanning segments follow: residues 20–40 (LIGP…GMFF) and 116–136 (MIML…VLSA).

Its subcellular location is the membrane. This is an uncharacterized protein from Saccharomyces cerevisiae (strain ATCC 204508 / S288c) (Baker's yeast).